The following is a 382-amino-acid chain: Mannitol-1-phosphate 5-dehydrogenase (382 aa).

3-14 (ALHFGAGNIGRG) is a binding site for NAD(+). Lysine 269 carries the post-translational modification N6-acetyllysine.

Belongs to the mannitol dehydrogenase family.

It carries out the reaction D-mannitol 1-phosphate + NAD(+) = beta-D-fructose 6-phosphate + NADH + H(+). The sequence is that of Mannitol-1-phosphate 5-dehydrogenase from Escherichia coli O45:K1 (strain S88 / ExPEC).